The sequence spans 211 residues: MTIGVVGRKCGMTRVFTEDGVSIPVTVIEIEPNRVTQFKNEESDGYRAVQVTVGERRASRVTKAQAGHFAKANVAAGRGVWEFRLEGEEFQVGDQINAEIFQAGQLVDVTGQSKGKGFAGTIKRWNFRGQDNTHGNSVSHRVPGSIGQCQTPGRVFKGKKMSGHMGAERVTVQSLEIVRVDAERNLLLVKGAVPGATGGDVFVRPAVKARG.

N5-methylglutamine is present on Gln-150.

This sequence belongs to the universal ribosomal protein uL3 family. As to quaternary structure, part of the 50S ribosomal subunit. Forms a cluster with proteins L14 and L19. Post-translationally, methylated by PrmB.

In terms of biological role, one of the primary rRNA binding proteins, it binds directly near the 3'-end of the 23S rRNA, where it nucleates assembly of the 50S subunit. This is Large ribosomal subunit protein uL3 from Stutzerimonas stutzeri (strain A1501) (Pseudomonas stutzeri).